Consider the following 860-residue polypeptide: Leucine--tRNA ligase (860 aa).

The 'HIGH' region signature appears at 42-52 (PYPSGRLHMGH). Residues 619-623 (KMSKS) carry the 'KMSKS' region motif. Lysine 622 contributes to the ATP binding site.

This sequence belongs to the class-I aminoacyl-tRNA synthetase family.

The protein localises to the cytoplasm. It carries out the reaction tRNA(Leu) + L-leucine + ATP = L-leucyl-tRNA(Leu) + AMP + diphosphate. The chain is Leucine--tRNA ligase from Actinobacillus succinogenes (strain ATCC 55618 / DSM 22257 / CCUG 43843 / 130Z).